We begin with the raw amino-acid sequence, 570 residues long: MSEKHPGPLVVEGKLTDAERMKLESNYLRGTIAEDLNDGLTGGFKGDNFLLIRFHGMYQQDDRDIRAERAEQKLEPHHAMLLRCRLPGGVITTKQWQAIDKFAGENTIYGSIRLTNRQTFQFHGILKKNVKPVHQMLHSVGLDALATANDMNRNVLCTSNPYESQLHAEAYEWAKKISEHLLPRTRAYAEIWLDQEKVATTDEEPILGQTYLPRKFKTTVVIPPQNDIDLHANDMNFVAIAENGKLVGFNLLVGGGLSIEHGNKKTYARTASEFGYLPLEHTLAVAEAVVTTQRDWGNRTDRKNAKTKYTLERVGVETFKAEVERRAGIKFEPIRPYEFTGRGDRIGWVKGIDDNWHLTLFIENGRILDYPGRPLKTGLLEIAKIHKGDFRITANQNLIIAGVPESEKAKIEKIAKESGLMNAVTPQRENSMACVSFPTCPLAMAEAERFLPSFIDNIDNLMAKHGVSDEHIVMRVTGCPNGCGRAMLAEVGLVGKAPGRYNLHLGGNRIGTRIPRMYKENITEPEILASLDELIGRWAKEREAGEGFGDFTVRAGIIRPVLDPARDLWD.

Positions 434, 440, 479, and 483 each coordinate [4Fe-4S] cluster. C483 serves as a coordination point for siroheme.

It belongs to the nitrite and sulfite reductase 4Fe-4S domain family. Alpha(8)-beta(8). The alpha component is a flavoprotein, the beta component is a hemoprotein. The cofactor is siroheme. [4Fe-4S] cluster serves as cofactor.

The catalysed reaction is hydrogen sulfide + 3 NADP(+) + 3 H2O = sulfite + 3 NADPH + 4 H(+). The protein operates within sulfur metabolism; hydrogen sulfide biosynthesis; hydrogen sulfide from sulfite (NADPH route): step 1/1. In terms of biological role, component of the sulfite reductase complex that catalyzes the 6-electron reduction of sulfite to sulfide. This is one of several activities required for the biosynthesis of L-cysteine from sulfate. This Shigella boydii serotype 4 (strain Sb227) protein is Sulfite reductase [NADPH] hemoprotein beta-component.